We begin with the raw amino-acid sequence, 408 residues long: Type II methyltransferase M.VspI (408 aa).

This sequence belongs to the N(4)/N(6)-methyltransferase family.

It catalyses the reaction a 2'-deoxyadenosine in DNA + S-adenosyl-L-methionine = an N(6)-methyl-2'-deoxyadenosine in DNA + S-adenosyl-L-homocysteine + H(+). A gamma subtype methylase, recognizes the double-stranded sequence 5'-ATTAAT-3', methylates A-5 on both strands, and protects the DNA from cleavage by the VspI endonuclease. The polypeptide is Type II methyltransferase M.VspI (Vibrio sp. (strain 343)).